The following is a 388-amino-acid chain: Ferrochelatase (388 aa).

Residues histidine 196 and glutamate 277 each contribute to the Fe cation site.

It belongs to the ferrochelatase family.

The protein resides in the cytoplasm. It carries out the reaction heme b + 2 H(+) = protoporphyrin IX + Fe(2+). The protein operates within porphyrin-containing compound metabolism; protoheme biosynthesis; protoheme from protoporphyrin-IX: step 1/1. Catalyzes the ferrous insertion into protoporphyrin IX. The sequence is that of Ferrochelatase from Nostoc sp. (strain PCC 7120 / SAG 25.82 / UTEX 2576).